Here is a 133-residue protein sequence, read N- to C-terminus: Large ribosomal subunit protein bL12 (133 aa).

The interval 98 to 118 (DMVESTPKPIKEGTGKEDAED) is disordered.

Belongs to the bacterial ribosomal protein bL12 family. As to quaternary structure, homodimer. Part of the ribosomal stalk of the 50S ribosomal subunit. Forms a multimeric L10(L12)X complex, where L10 forms an elongated spine to which 2 to 4 L12 dimers bind in a sequential fashion. Binds GTP-bound translation factors.

Functionally, forms part of the ribosomal stalk which helps the ribosome interact with GTP-bound translation factors. Is thus essential for accurate translation. This chain is Large ribosomal subunit protein bL12, found in Crocosphaera subtropica (strain ATCC 51142 / BH68) (Cyanothece sp. (strain ATCC 51142)).